The primary structure comprises 388 residues: MFSLIRAKRLAIGIAALAWSTGAVMASEHWPDLPVGIKNGAAARIGNMAYVGLGSAGTDFYALDLNNPSKGWVKRANFIGPATNGAAMAAAGGKIFAFSGNGKATPDAKSPIIFDTAYVYDPGSDGWSKLDTQTPVGLSGAKAVGLADGRIAIFGGYNKELFDKYLADVGAIDKDKEPEAYRKLVDSYMGMKPEAYRWNDEVLVYDPAGNNWGSLGANPFLPNCDPAMATMGEGDFLLVSGEIKPGLRTPEAKLVKIRDGAAHWQKVSDLPPLSGSEPQEGVAGAYAGKAGDDVLVAGGANFKGAQANAAAGKWFAHDGLAKSWRDDVYAFDGKDWKVAGKLPRGLAYGAAFDAPGGLLVVGGEDRDGKARKEVFLLKWDGKALSVEN.

The signal sequence occupies residues 1 to 26; that stretch reads MFSLIRAKRLAIGIAALAWSTGAVMA. Kelch repeat units lie at residues 48–92, 94–147, 149–186, 187–232, 236–285, 307–356, and 358–387; these read MAYV…AAAG, KIFA…VGLA, GRIAIFGGYNKELFDKYLADVGAIDKDKEPEAYRKLVD, SYMG…ATMG, FLLV…VAGA, ANAA…DAPG, and LLVVGGEDRDGKARKEVFLLKWDGKALSVE. The active-site Proton acceptor is the Glu-242.

Belongs to the NanM family. As to quaternary structure, homodimer.

The protein localises to the periplasm. The enzyme catalyses N-acetyl-alpha-neuraminate = N-acetyl-beta-neuraminate. Converts alpha-N-acetylneuranimic acid (Neu5Ac) to the beta-anomer, accelerating the equilibrium between the alpha- and beta-anomers. Probably facilitates sialidase-negative bacteria to compete successfully for limited amounts of extracellular Neu5Ac, which is likely taken up in the beta-anomer. In addition, the rapid removal of sialic acid from solution might be advantageous to the bacterium to damp down host responses. In Brucella melitensis biotype 1 (strain ATCC 23456 / CCUG 17765 / NCTC 10094 / 16M), this protein is N-acetylneuraminate epimerase.